A 648-amino-acid chain; its full sequence is Serine/threonine-protein kinase plk-1 (648 aa).

Positions 1–24 (MNRLPNIAKPPQKSNQRKEKAPPE) are disordered. A Protein kinase domain is found at 38 to 289 (YEKGRFLGKG…AKQVQRDGFF (252 aa)). Residues 44–52 (LGKGGFAHC) and Lys67 contribute to the ATP site. Asp161 acts as the Proton acceptor in catalysis. 2 POLO box domains span residues 412–492 (WISK…YMND) and 514–596 (TLRV…RLMS). Positions 612 to 629 (PRSMAAARSASAGSRGPN) are enriched in low complexity.

Belongs to the protein kinase superfamily. Ser/Thr protein kinase family. CDC5/Polo subfamily. Interacts with mex-5, mex-6 and spat-1. Embryos.

It localises to the cytoplasm. The protein localises to the cytoskeleton. Its subcellular location is the microtubule organizing center. It is found in the centrosome. The protein resides in the midbody. It localises to the nucleus. The protein localises to the chromosome. Its subcellular location is the centromere. It is found in the kinetochore. It carries out the reaction L-seryl-[protein] + ATP = O-phospho-L-seryl-[protein] + ADP + H(+). It catalyses the reaction L-threonyl-[protein] + ATP = O-phospho-L-threonyl-[protein] + ADP + H(+). Functionally, required for oocyte nuclear envelope breakdown before entry of oocyte into spermatheca. In meiotic cells, required for spindle dynamics and probably for spindle attachment to the chromosomes. Zygotic role in the development of the germline and nerve cord. In mitotic cells, plays a role in spindle organization and centrosome maturation. Involved in asymmetric nuclear localization of cdc-25.1 during embryogenesis which affects cell division timing. Together with plk-2, regulates cytoplasm polarity in early embryos. May play a minor role in chromosome pairing and synapsis during oocyte meiosis I. This chain is Serine/threonine-protein kinase plk-1 (plk-1), found in Caenorhabditis elegans.